The following is a 336-amino-acid chain: Dihydroorotate dehydrogenase (quinone) (336 aa).

FMN-binding positions include 62–66 and threonine 86; that span reads AGMDK. Lysine 66 contributes to the substrate binding site. 111–115 is a binding site for substrate; the sequence is NRMGF. FMN contacts are provided by asparagine 139 and asparagine 172. Asparagine 172 serves as a coordination point for substrate. Serine 175 serves as the catalytic Nucleophile. Asparagine 177 lines the substrate pocket. FMN contacts are provided by lysine 217 and threonine 245. 246-247 provides a ligand contact to substrate; sequence NT. FMN-binding positions include glycine 268, glycine 297, and 318–319; that span reads YS.

The protein belongs to the dihydroorotate dehydrogenase family. Type 2 subfamily. Monomer. It depends on FMN as a cofactor.

It localises to the cell membrane. The enzyme catalyses (S)-dihydroorotate + a quinone = orotate + a quinol. It functions in the pathway pyrimidine metabolism; UMP biosynthesis via de novo pathway; orotate from (S)-dihydroorotate (quinone route): step 1/1. Its function is as follows. Catalyzes the conversion of dihydroorotate to orotate with quinone as electron acceptor. In Buchnera aphidicola subsp. Schizaphis graminum (strain Sg), this protein is Dihydroorotate dehydrogenase (quinone).